Reading from the N-terminus, the 608-residue chain is Isocitrate dehydrogenase kinase/phosphatase (608 aa).

ATP contacts are provided by residues 328–334 (APGIKGL) and Lys-349. Asp-384 is a catalytic residue.

It belongs to the AceK family.

It localises to the cytoplasm. It catalyses the reaction L-seryl-[isocitrate dehydrogenase] + ATP = O-phospho-L-seryl-[isocitrate dehydrogenase] + ADP + H(+). Its function is as follows. Bifunctional enzyme which can phosphorylate or dephosphorylate isocitrate dehydrogenase (IDH) on a specific serine residue. This is a regulatory mechanism which enables bacteria to bypass the Krebs cycle via the glyoxylate shunt in response to the source of carbon. When bacteria are grown on glucose, IDH is fully active and unphosphorylated, but when grown on acetate or ethanol, the activity of IDH declines drastically concomitant with its phosphorylation. The sequence is that of Isocitrate dehydrogenase kinase/phosphatase from Cupriavidus pinatubonensis (strain JMP 134 / LMG 1197) (Cupriavidus necator (strain JMP 134)).